The sequence spans 251 residues: Methionine aminopeptidase (251 aa).

His-76 provides a ligand contact to substrate. Positions 93, 104, and 168 each coordinate a divalent metal cation. His-175 serves as a coordination point for substrate. 2 residues coordinate a divalent metal cation: Glu-202 and Glu-233.

It belongs to the peptidase M24A family. Methionine aminopeptidase type 1 subfamily. As to quaternary structure, monomer. Requires Co(2+) as cofactor. It depends on Zn(2+) as a cofactor. The cofactor is Mn(2+). Fe(2+) is required as a cofactor.

It catalyses the reaction Release of N-terminal amino acids, preferentially methionine, from peptides and arylamides.. In terms of biological role, removes the N-terminal methionine from nascent proteins. The N-terminal methionine is often cleaved when the second residue in the primary sequence is small and uncharged (Met-Ala-, Cys, Gly, Pro, Ser, Thr, or Val). Requires deformylation of the N(alpha)-formylated initiator methionine before it can be hydrolyzed. This Staphylococcus epidermidis (strain ATCC 12228 / FDA PCI 1200) protein is Methionine aminopeptidase.